The following is a 288-amino-acid chain: Quinate/shikimate dehydrogenase (288 aa).

Substrate contacts are provided by K71 and D107. Residues 132-135 (AGGA), 155-158 (NRRD), K205, 232-235 (CVYN), and G255 contribute to the NAD(+) site.

The protein belongs to the shikimate dehydrogenase family. In terms of assembly, homodimer.

It carries out the reaction L-quinate + NAD(+) = 3-dehydroquinate + NADH + H(+). The enzyme catalyses L-quinate + NADP(+) = 3-dehydroquinate + NADPH + H(+). It catalyses the reaction shikimate + NADP(+) = 3-dehydroshikimate + NADPH + H(+). The catalysed reaction is shikimate + NAD(+) = 3-dehydroshikimate + NADH + H(+). The protein operates within metabolic intermediate biosynthesis; chorismate biosynthesis; chorismate from D-erythrose 4-phosphate and phosphoenolpyruvate: step 4/7. Functionally, the actual biological function of YdiB remains unclear, nor is it known whether 3-dehydroshikimate or quinate represents the natural substrate. Catalyzes the reversible NAD-dependent reduction of both 3-dehydroshikimate (DHSA) and 3-dehydroquinate to yield shikimate (SA) and quinate, respectively. It can use both NAD or NADP for catalysis, however it has higher catalytic efficiency with NAD. The protein is Quinate/shikimate dehydrogenase of Escherichia coli O81 (strain ED1a).